The primary structure comprises 367 residues: Aminomethyltransferase (367 aa).

It belongs to the GcvT family. The glycine cleavage system is composed of four proteins: P, T, L and H.

It catalyses the reaction N(6)-[(R)-S(8)-aminomethyldihydrolipoyl]-L-lysyl-[protein] + (6S)-5,6,7,8-tetrahydrofolate = N(6)-[(R)-dihydrolipoyl]-L-lysyl-[protein] + (6R)-5,10-methylene-5,6,7,8-tetrahydrofolate + NH4(+). The glycine cleavage system catalyzes the degradation of glycine. The sequence is that of Aminomethyltransferase from Mycolicibacterium paratuberculosis (strain ATCC BAA-968 / K-10) (Mycobacterium paratuberculosis).